We begin with the raw amino-acid sequence, 655 residues long: SRSF protein kinase 1 (655 aa).

The tract at residues 1–57 is disordered; that stretch reads MERKVLALQARKKRTKAKKDKAQRKPETQHRGSAPHSESDLPEQEEEILGSDDDEQE. Over residues 10 to 22 the composition is skewed to basic residues; that stretch reads ARKKRTKAKKDKA. The segment covering 40 to 57 has biased composition (acidic residues); it reads DLPEQEEEILGSDDDEQE. Ser-51 is modified (phosphoserine; by CK2). The Protein kinase domain maps to 80-653; that stretch reads YHVIRKLGWG…AAECLRHPWL (574 aa). ATP-binding positions include 86-94 and Lys-109; that span reads LGWGHFSTV. The active-site Proton acceptor is the Asp-213. Disordered stretches follow at residues 238-341 and 397-417; these read WQRS…QDQT and FLSS…CTPI. Over residues 265–276 the composition is skewed to basic residues; it reads KNKKKKLKKKQK. 2 stretches are compositionally biased toward basic and acidic residues: residues 277 to 288 and 304 to 318; these read RQAELLEKRMQE and NKQE…RPLK. A phosphoserine mark is found at Ser-309, Ser-311, and Ser-333. A Phosphoserine; by CK2 modification is found at Ser-555.

It belongs to the protein kinase superfamily. CMGC Ser/Thr protein kinase family. In terms of assembly, monomer. Found in a multisubunit complex containing seven proteins, named toposome, which separates entangled circular chromatin DNA during chromosome segregation. Interacts with HHV-1 ICP27 protein. Interacts with DNAJC8 and AHSA1/AHA1 and this mediates formation of a complex with the Hsp70 /Hsp90 machinery. Binds to IGF2BP1, SYNCRIP, HNRNPA2B1 and HNRNPC. Interacts with SAFB/SAFB1 and SAFB2 which inhibits its activity. The cofactor is Mg(2+).

It localises to the cytoplasm. It is found in the nucleus. The protein localises to the nucleoplasm. The protein resides in the nucleus matrix. Its subcellular location is the microsome. It localises to the nucleus speckle. It is found in the chromosome. The catalysed reaction is L-seryl-[protein] + ATP = O-phospho-L-seryl-[protein] + ADP + H(+). The enzyme catalyses L-threonyl-[protein] + ATP = O-phospho-L-threonyl-[protein] + ADP + H(+). With respect to regulation, activated by phosphorylation on Ser-51 and Ser-555. Functionally, serine/arginine-rich protein-specific kinase which specifically phosphorylates its substrates at serine residues located in regions rich in arginine/serine dipeptides, known as RS domains and is involved in the phosphorylation of SR splicing factors and the regulation of splicing. Plays a central role in the regulatory network for splicing, controlling the intranuclear distribution of splicing factors in interphase cells and the reorganization of nuclear speckles during mitosis. Can influence additional steps of mRNA maturation, as well as other cellular activities, such as chromatin reorganization in somatic and sperm cells and cell cycle progression. Phosphorylates SFRS2, ZRSR2, LBR and PRM1. Phosphorylates SRSF1 using a directional (C-terminal to N-terminal) and a dual-track mechanism incorporating both processive phosphorylation (in which the kinase stays attached to the substrate after each round of phosphorylation) and distributive phosphorylation steps (in which the kinase and substrate dissociate after each phosphorylation event). The RS domain of SRSF1 binds first to a docking groove in the large lobe of the kinase domain of SRPK1. This induces certain structural changes in SRPK1 and/or RRM2 domain of SRSF1, allowing RRM2 to bind the kinase and initiate phosphorylation. The cycles continue for several phosphorylation steps in a processive manner (steps 1-8) until the last few phosphorylation steps (approximately steps 9-12). During that time, a mechanical stress induces the unfolding of the beta-4 motif in RRM2, which then docks at the docking groove of SRPK1. This also signals RRM2 to begin to dissociate, which facilitates SRSF1 dissociation after phosphorylation is completed. Can mediate hepatitis B virus (HBV) core protein phosphorylation. It plays a negative role in the regulation of HBV replication through a mechanism not involving the phosphorylation of the core protein but by reducing the packaging efficiency of the pregenomic RNA (pgRNA) without affecting the formation of the viral core particles. Can induce splicing of exon 10 in MAPT/TAU. The polypeptide is SRSF protein kinase 1 (Pongo abelii (Sumatran orangutan)).